A 587-amino-acid chain; its full sequence is Lipoprotein LpqB (587 aa).

An N-terminal signal peptide occupies residues 1–19; the sequence is MERLMRLTILLFLGAVLAG. A lipid anchor (N-palmitoyl cysteine) is attached at Cys20. Residue Cys20 is the site of S-diacylglycerol cysteine attachment.

This sequence belongs to the LpqB lipoprotein family.

Its subcellular location is the cell membrane. The protein is Lipoprotein LpqB of Mycobacterium bovis (strain ATCC BAA-935 / AF2122/97).